Consider the following 1217-residue polypeptide: MYIKQVIIQGFRSYRDQTIVDPFSSKHNVIVGRNGSGKSNFFYAIQFVLSDEFSHLRPEQRLALLHEGTGPRVISAFVEIIFDNSDNRLPIDKEEVSLRRVIGAKKDQYFLDKKMVTKNDVMNLLESAGFSRSNPYYIVKQGKINQMATAPDSQRLKLLREVAGTRVYDERKEESISLMKETEGKREKINELLKYIEERLHTLEEEKEELAQYQKWDKMRRALEYTIYNQELNETRAKLDELSAKRETSGEKSRQLRDAQQDARDKMEDIERQVRELKTKISAMKEEKEQLSAERQEQIKQRTKLELKAKDLQDELAGNSEQRKRLLKERQKLLEKIEEKQKELAETEPKFNSVKEKEERGIARLAQATQERTDLYAKQGRGSQFTSKEERDKWIKKELKSLDQAINDKKRQIAAIHKDLEDTEANKEKNLEQYNKLDQDLNEVKARVEELDRKYYEVKNKKDELQSERNYLWREENAEQQALAAKREDLEKKQQLLRAATGKAILNGIDSINKVLEHFRRKGINQHVQNGYHGIVMNNFECEPAFYTCVEVTAGNRLFYHIVDSDEVSTKILMEFNKMNLPGEVTFLPLNKLDVRDTAYPETNDAIPMISKLRYNPRFDKAFKHVFGKTLICRSMEVSTQLARAFTMDCITLEGDQVSHRGALTGGYYDTRKSRLELQKDVRKAEEELGELEAKLNENLRRNIERINNEIDQLMNQMQQIETQQRKFKASRDSILSEMKMLKEKRQQSEKTFMPKQRSLQSLEASLHAMESTRESLKAELGTDLLSQLSLEDQKRVDALNDEIRQLQQENRQLLNERIKLEGIITRVETYLNENLRKRLDQVEQELNELRETEGGTVLTATTSELEAINKRVKDTMARSEDLDNSIDKTEAGIKELQKSMERWKNMEKEHMDAINHDTKELEKMTNRQGMLLKKKEECMKKIRELGSLPQEAFEKYQTLSLKQLFRKLEQCNTELKKYSHVNKKALDQFVNFSEQKEKLIKRQEELDRGYKSIMELMNVLELRKYEAIQLTFKQVSKNFSEVFQKLVPGGKATLVMKKGDVEGSQSQDEGEGSGESERGSGSQSSVPSVDQFTGVGIRVSFTGKQGEMREMQQLSGGQKSLVALALIFAIQKCDPAPFYLFDEIDQALDAQHRKAVSDMIMELAVHAQFITTTFRPELLESADKFYGVKFRNKVSHIDVITAEMAKDFVEDDTTHG.

Residue Gly32–Ser39 participates in ATP binding. N6-acetyllysine is present on residues Lys105, Lys106, and Lys140. Coiled coils occupy residues Met179–Lys350 and Lys393–Lys503. Positions Leu242–Glu268 are disordered. One can recognise an SMC hinge domain in the interval Asn530–Leu642. Coiled-coil stretches lie at residues Tyr669–Asn916 and Gln958–Gln989. At Thr783 the chain carries Phosphothreonine. A phosphoserine mark is found at Ser787 and Ser886. A phosphoserine mark is found at Ser1013, Ser1065, Ser1067, Ser1074, and Ser1083. The disordered stretch occupies residues Lys1059 to Val1090. Lys1190 bears the N6-acetyllysine mark.

Belongs to the SMC family. SMC3 subfamily. As to quaternary structure, forms a heterodimer with SMC1A or SMC1B in cohesin complexes. Cohesin complexes are composed of the SMC1 (SMC1A or SMC1B) and SMC3 heterodimer attached via their SMC hinge domain, RAD21 which link them, and one STAG protein (STAG1, STAG2 or STAG3), which interacts with RAD21. Also found in meiosis-specific cohesin complexes. Found in a complex with SMC1A, CDCA5 and RAD21, PDS5A/SCC-112 and PDS5B/APRIN. Interacts with PDS5A and WAPL; regulated by SMC3 acetylation. Interacts with NUMA1, and forms a ternary complex with KIF3B and KIFAP3, suggesting a function in tethering the chromosomes to the spindle pole and a function in chromosome movement. Interacts with SYCP2 and RPGR. Interacts (via SMC hinge domain) with KIAA1328 (via N- and C-terminal domains). Interacts with DDX11. The cohesin complex interacts with the cohesin loading complex subunits NIPBL/Scc2 (via HEAT repeats) and MAU2/Scc4. NIPBL directly contacts all members of the complex, RAD21, SMC1A/B, SMC3 and STAG1. Interacts with MXI1, MXD3 and MXD4. Interacts with STAG3. Interacts with the NuRD complex component HDAC2; the interaction is direct. Phosphorylated at Ser-1083 in a SPO11-dependent manner. In terms of processing, acetylation at Lys-105 and Lys-106 by ESCO1 is important for genome stability and S phase sister chromatid cohesion. Regulated by DSCC1, it is required for processive DNA synthesis, coupling sister chromatid cohesion establishment during S phase to DNA replication. Deacetylation by HDAC8, regulates release of the cohesin complex from chromatin. Post-translationally, ubiquitinated by the DCX(DCAF15) complex, leading to its degradation. Spermatocytes (at protein level). Widely expressed, with higher expression in testis and brain.

It localises to the nucleus. The protein localises to the chromosome. Its subcellular location is the centromere. Its function is as follows. Central component of cohesin, a complex required for chromosome cohesion during the cell cycle. The cohesin complex may form a large proteinaceous ring within which sister chromatids can be trapped. At anaphase, the complex is cleaved and dissociates from chromatin, allowing sister chromatids to segregate. Cohesion is coupled to DNA replication and is involved in DNA repair. The cohesin complex also plays an important role in spindle pole assembly during mitosis and in chromosomes movement. The sequence is that of Structural maintenance of chromosomes protein 3 (Smc3) from Mus musculus (Mouse).